The sequence spans 139 residues: Thyrotropin subunit beta (139 aa).

The N-terminal stretch at 1-20 (MELSVAMCGLLCLLFSQAVP) is a signal peptide. 6 disulfide bridges follow: C22-C72, C36-C87, C39-C127, C47-C103, C51-C105, and C108-C115. N43 carries an N-linked (GlcNAc...) asparagine glycan.

This sequence belongs to the glycoprotein hormones subunit beta family. As to quaternary structure, heterodimer of a common alpha chain and a unique beta chain which confers biological specificity to thyrotropin, lutropin, follitropin and gonadotropin.

It is found in the secreted. Indispensable for the control of thyroid structure and metabolism. May play some role in the biological processes of the immature fishes. The protein is Thyrotropin subunit beta (tshb) of Salmo salar (Atlantic salmon).